We begin with the raw amino-acid sequence, 412 residues long: Na(+)-translocating NADH-quinone reductase subunit B (412 aa).

3 consecutive transmembrane segments (helical) span residues 57-77, 127-147, and 163-183; these read MILVWFAVFPAMFWGMYNVGL, VFFLPIYITVFIVGGFWEVLF, and SILFALIVPPTLPLWQAALGI. T236 carries the post-translational modification FMN phosphoryl threonine. The next 5 membrane-spanning stretches (helical) occupy residues 270 to 290, 297 to 317, 322 to 342, 358 to 378, and 381 to 401; these read GSIGEVSTLMILIGGAIILFG, IVAGVMIGMIATATLFNVIGS, MFSMPWYWHLVLGGFAFGMMF, WSYGVLIGVMCVLIRVVNPAY, and GMMLAILFANLFAPLFDYLVV.

It belongs to the NqrB/RnfD family. As to quaternary structure, composed of six subunits; NqrA, NqrB, NqrC, NqrD, NqrE and NqrF. FMN serves as cofactor.

It is found in the cell inner membrane. It catalyses the reaction a ubiquinone + n Na(+)(in) + NADH + H(+) = a ubiquinol + n Na(+)(out) + NAD(+). In terms of biological role, NQR complex catalyzes the reduction of ubiquinone-1 to ubiquinol by two successive reactions, coupled with the transport of Na(+) ions from the cytoplasm to the periplasm. NqrA to NqrE are probably involved in the second step, the conversion of ubisemiquinone to ubiquinol. This chain is Na(+)-translocating NADH-quinone reductase subunit B, found in Klebsiella pneumoniae (strain 342).